The primary structure comprises 189 residues: Vacuolar iron transporter homolog 2 (189 aa).

Over M1 to A10 the chain is Cytoplasmic. The chain crosses the membrane as a helical span at residues V11–V31. The Vacuolar portion of the chain corresponds to N32–M38. Residues L39–V59 traverse the membrane as a helical segment. The Cytoplasmic segment spans residues S60–A97. Residues F98 to I118 form a helical membrane-spanning segment. The Vacuolar segment spans residues K119–R124. The chain crosses the membrane as a helical span at residues V125–Y145. The Cytoplasmic portion of the chain corresponds to L146 to L159. A helical membrane pass occupies residues L160 to F180. Topologically, residues H181–A189 are vacuolar.

Belongs to the CCC1 family.

It localises to the vacuole membrane. It carries out the reaction Fe(2+)(in) = Fe(2+)(out). Probable vacuolar iron transporter that may be involved in the regulation of iron distribution throughout the plant. This chain is Vacuolar iron transporter homolog 2, found in Oryza sativa subsp. japonica (Rice).